Reading from the N-terminus, the 506-residue chain is NADH-quinone oxidoreductase subunit N (506 aa).

The next 14 helical transmembrane spans lie at 14–34 (MVPE…DLFF), 40–60 (YVAL…ITLY), 72–92 (FVLD…AALI), 109–129 (GEYY…ASSV), 131–151 (FVTL…LVGI), 166–186 (VING…LYGI), 209–229 (LLLA…IATV), 256–276 (MAGF…VSVQ), 286–306 (MSIY…VVAL), 314–334 (LFAY…VALS), 343–363 (FYML…HGLI), 385–405 (AIVM…AGFI), 420–440 (AHYV…VYYF), and 465–485 (IVMS…MIGY).

It belongs to the complex I subunit 2 family. In terms of assembly, NDH-1 is composed of 14 different subunits. Subunits NuoA, H, J, K, L, M, N constitute the membrane sector of the complex.

The protein resides in the cell membrane. It catalyses the reaction a quinone + NADH + 5 H(+)(in) = a quinol + NAD(+) + 4 H(+)(out). Its function is as follows. NDH-1 shuttles electrons from NADH, via FMN and iron-sulfur (Fe-S) centers, to quinones in the respiratory chain. The immediate electron acceptor for the enzyme in this species is believed to be a menaquinone. Couples the redox reaction to proton translocation (for every two electrons transferred, four hydrogen ions are translocated across the cytoplasmic membrane), and thus conserves the redox energy in a proton gradient. The polypeptide is NADH-quinone oxidoreductase subunit N (Bacillus anthracis).